An 878-amino-acid chain; its full sequence is Alanine--tRNA ligase (878 aa).

Residues His568, His572, Cys669, and His673 each coordinate Zn(2+).

Belongs to the class-II aminoacyl-tRNA synthetase family. It depends on Zn(2+) as a cofactor.

The protein localises to the cytoplasm. It catalyses the reaction tRNA(Ala) + L-alanine + ATP = L-alanyl-tRNA(Ala) + AMP + diphosphate. Its function is as follows. Catalyzes the attachment of alanine to tRNA(Ala) in a two-step reaction: alanine is first activated by ATP to form Ala-AMP and then transferred to the acceptor end of tRNA(Ala). Also edits incorrectly charged Ser-tRNA(Ala) and Gly-tRNA(Ala) via its editing domain. In Polaromonas sp. (strain JS666 / ATCC BAA-500), this protein is Alanine--tRNA ligase.